A 111-amino-acid polypeptide reads, in one-letter code: Translation initiation factor 1A 1 (111 aa).

The tract at residues 1–26 is disordered; sequence MTLADLKKPTSRATPSTEETFTRVRT. The region spanning 22 to 96 is the S1-like domain; it reads TRVRTPRREN…EKADVIWKYT (75 aa).

Belongs to the eIF-1A family.

Functionally, seems to be required for maximal rate of protein biosynthesis. Enhances ribosome dissociation into subunits and stabilizes the binding of the initiator Met-tRNA(I) to 40 S ribosomal subunits. The protein is Translation initiation factor 1A 1 (eIF1A1) of Methanosarcina acetivorans (strain ATCC 35395 / DSM 2834 / JCM 12185 / C2A).